The sequence spans 1017 residues: Multiple C2 domain and transmembrane region protein 14 (1017 aa).

A C2 1 domain is found at 1-110 (MADNVLRKLI…ASAGSETLVY (110 aa)). Residues 139–231 (AAPAATEPKP…PAEVKNPPIP (93 aa)) are disordered. A compositionally biased stretch (low complexity) spans 141–153 (PAATEPKPEAAAA). Over residues 154–213 (TEEKPPEIAKAEDGKKETEAAKTEEKKEGDKKEEEKPKEEAKPDEKKPDAPPDTKAKKPD) the composition is skewed to basic and acidic residues. Over residues 217–231 (APPPPPAEVKNPPIP) the composition is skewed to pro residues. C2 domains are found at residues 258–387 (DLEL…PQWY), 420–554 (DSGG…SRWF), and 587–714 (VTSD…LNSY). Aspartate 296, asparagine 299, aspartate 352, threonine 355, and glutamate 359 together coordinate Ca(2+). 2 helical membrane passes run 851–871 (VAIV…AFLI) and 957–977 (ATCI…IVPF).

It belongs to the MCTP family. It depends on Ca(2+) as a cofactor. As to expression, expressed in incipient leaf primordia and in roots meristems. Observed in flowers.

Its subcellular location is the membrane. The protein localises to the vesicle. It is found in the golgi apparatus membrane. Its function is as follows. May function as a signaling molecule by regulating the trafficking of other regulators. The sequence is that of Multiple C2 domain and transmembrane region protein 14 from Arabidopsis thaliana (Mouse-ear cress).